A 475-amino-acid chain; its full sequence is Rho GTPase-activating protein 15 (475 aa).

The disordered stretch occupies residues 1–22 (MERSTTSDTASEKPNPSHSTGA). In terms of domain architecture, PH spans 80–190 (VVEKEGYLLK…WFHAIKNAID (111 aa)). The region spanning 281–470 (SHLHLVCEHE…LMLSEYSKIF (190 aa)) is the Rho-GAP domain.

Its subcellular location is the cytoplasm. It is found in the membrane. Its function is as follows. GTPase activator for the Rho-type GTPases by converting them to an inactive GDP-bound state. This chain is Rho GTPase-activating protein 15 (ARHGAP15), found in Gallus gallus (Chicken).